A 257-amino-acid polypeptide reads, in one-letter code: MSDRKNVLFVVGKSSAVKELEEFASCNADRANVKIEIVENIGLATDGPLYSAILSGFGADDNVSCDLNLLPTYTTLLTAGGTLIAKTDVGTEDALVKRMKLCGFLNVAKSESVPGVVVGNMPTYKVGSSDKVTLNPEMKENVVSAWKLDDNNSETISEDDLLEADDLIKPDSSSLRVCATTKKAKACKDCSCGLAEELEANRLKDTPKPDTSNAKSSCGSCYLGDAFRCASCPYLGMPAFRPGEKVQLAGNLLQDDF.

Positions 1-134 are N-terminal SAM-like domain; that stretch reads MSDRKNVLFV…KVGSSDKVTL (134 aa). A linker region spans residues 135–168; sequence NPEMKENVVSAWKLDDNNSETISEDDLLEADDLI. [2Fe-2S] cluster is bound by residues Cys-178, Cys-187, Cys-190, and Cys-192. The segment at 178 to 192 is fe-S binding site A; sequence CATTKKAKACKDCSC. Residues Cys-218, Cys-221, Cys-229, and Cys-232 each coordinate [4Fe-4S] cluster. Short sequence motifs (cx2C motif) lie at residues 218 to 221 and 229 to 232; these read CGSC and CASC. The fe-S binding site B stretch occupies residues 218 to 232; that stretch reads CGSCYLGDAFRCASC.

The protein belongs to the anamorsin family. As to quaternary structure, monomer. [2Fe-2S] cluster serves as cofactor. Requires [4Fe-4S] cluster as cofactor.

The protein resides in the cytoplasm. The protein localises to the mitochondrion intermembrane space. In terms of biological role, component of the cytosolic iron-sulfur (Fe-S) protein assembly (CIA) machinery. Required for the maturation of extramitochondrial Fe-S proteins. Part of an electron transfer chain functioning in an early step of cytosolic Fe-S biogenesis, facilitating the de novo assembly of a [4Fe-4S] cluster on the cytosolic Fe-S scaffold complex. Electrons are transferred from NADPH via a FAD- and FMN-containing diflavin oxidoreductase. Together with the diflavin oxidoreductase, also required for the assembly of the diferric tyrosyl radical cofactor of ribonucleotide reductase (RNR), probably by providing electrons for reduction during radical cofactor maturation in the catalytic small subunit. In Acyrthosiphon pisum (Pea aphid), this protein is Anamorsin homolog.